A 216-amino-acid chain; its full sequence is LexA repressor (216 aa).

Positions 29 to 49 (RAEIAQALGFRSPNAAEDHLK) form a DNA-binding region, H-T-H motif. Active-site for autocatalytic cleavage activity residues include Ser-134 and Lys-171.

This sequence belongs to the peptidase S24 family. As to quaternary structure, homodimer.

It carries out the reaction Hydrolysis of Ala-|-Gly bond in repressor LexA.. Its function is as follows. Represses a number of genes involved in the response to DNA damage (SOS response), including recA and lexA. In the presence of single-stranded DNA, RecA interacts with LexA causing an autocatalytic cleavage which disrupts the DNA-binding part of LexA, leading to derepression of the SOS regulon and eventually DNA repair. This Bordetella bronchiseptica (strain ATCC BAA-588 / NCTC 13252 / RB50) (Alcaligenes bronchisepticus) protein is LexA repressor.